Here is a 338-residue protein sequence, read N- to C-terminus: Ribosomal RNA small subunit methyltransferase C (338 aa).

Belongs to the methyltransferase superfamily. RsmC family. As to quaternary structure, monomer.

The protein resides in the cytoplasm. The enzyme catalyses guanosine(1207) in 16S rRNA + S-adenosyl-L-methionine = N(2)-methylguanosine(1207) in 16S rRNA + S-adenosyl-L-homocysteine + H(+). In terms of biological role, specifically methylates the guanine in position 1207 of 16S rRNA in the 30S particle. This chain is Ribosomal RNA small subunit methyltransferase C, found in Buchnera aphidicola subsp. Acyrthosiphon pisum (strain APS) (Acyrthosiphon pisum symbiotic bacterium).